The sequence spans 734 residues: MASRFPKFSQGLAQDPTTRRIWFGIATAHDFESHDDITEERLYQQIFASHFGQLAIIFLWTSGNLFHVAWQGNFETWVNDPLHIRPIAHAIWDPHFGQPAIEAFTRGGAPGPVNIAYSGVYQWWYTIGLRTNEDLYIGALFLMFCSALFLIAGRLHLQPKRKPSVSWFKNAESRLNHHLSGLFGVSSLAWTGHLVHVALPESRGIHVRWTNFLNVLPYPQGLGPLFGGQWILYSQNPDSSSHLFGTSEGAGTAILTLLGGFHPQTQSLWLTDIAHHHLAIALVFLIAGHMYRTNFGIGHSIKDILEAHTPPGGFLGRGHKSLYNTINNSLHFQLGLALASLGVVTSLVAQHMYSLPAYAFIAQDFTTQAALYTHHQYIAGFIMTGAFAHGAIFFIRDYNPEQNKDNVLARMLEHKEAIISHLSWASLFLGFHTLGLYVHNDVMLAFGTPEKQILIEPIFAQWIQSAHGKSFYGFDVLLASTKDPAFVAGKSLWLPGWLKAVNDNKNSLFLTIGPGDFLVHHAIALGLHTTTLILVKGALDARGSKLMPDKKDFGYSFPCDGPGRGGTCDISAWDAFYLAVFWMLNTVGWVTFYWHWKHITLWQGNAAQFNESSTYLMGWLRDYLWLNSSQLINGYNPFGMNTLSVWAWMFLFGHLVWATGFMFLISWRGYWQELIETLVWAHERTPLANLVRWKDKPVALSIVQARLVGLVHFSVGYIFTYAAFLIASTSGKFG.

8 consecutive transmembrane segments (helical) span residues 46–69 (IFAS…FHVA), 135–158 (LYIG…LHLQ), 175–199 (LNHH…HVAL), 273–291 (IAHH…GHMY), 330–353 (LHFQ…QHMY), 369–395 (AALY…IFFI), 417–439 (AIIS…LYVH), and 517–535 (FLVH…LILV). [4Fe-4S] cluster contacts are provided by Cys-559 and Cys-568. 2 helical membrane passes run 575–596 (AFYL…YWHW) and 643–665 (LSVW…MFLI). Chlorophyll a contacts are provided by His-654, Met-662, and Tyr-670. Trp-671 contributes to the phylloquinone binding site. The helical transmembrane segment at 707–727 (LVGLVHFSVGYIFTYAAFLIA) threads the bilayer.

This sequence belongs to the PsaA/PsaB family. In terms of assembly, the PsaA/B heterodimer binds the P700 chlorophyll special pair and subsequent electron acceptors. PSI consists of a core antenna complex that captures photons, and an electron transfer chain that converts photonic excitation into a charge separation. The eukaryotic PSI reaction center is composed of at least 11 subunits. The cofactor is P700 is a chlorophyll a/chlorophyll a' dimer, A0 is one or more chlorophyll a, A1 is one or both phylloquinones and FX is a shared 4Fe-4S iron-sulfur center..

The protein localises to the plastid. The protein resides in the chloroplast thylakoid membrane. It carries out the reaction reduced [plastocyanin] + hnu + oxidized [2Fe-2S]-[ferredoxin] = oxidized [plastocyanin] + reduced [2Fe-2S]-[ferredoxin]. In terms of biological role, psaA and PsaB bind P700, the primary electron donor of photosystem I (PSI), as well as the electron acceptors A0, A1 and FX. PSI is a plastocyanin-ferredoxin oxidoreductase, converting photonic excitation into a charge separation, which transfers an electron from the donor P700 chlorophyll pair to the spectroscopically characterized acceptors A0, A1, FX, FA and FB in turn. Oxidized P700 is reduced on the lumenal side of the thylakoid membrane by plastocyanin. This Gnetum parvifolium (Small-leaved jointfir) protein is Photosystem I P700 chlorophyll a apoprotein A2.